We begin with the raw amino-acid sequence, 98 residues long: A-type ATP synthase subunit F (98 aa).

It belongs to the V-ATPase F subunit family. In terms of assembly, the A-type ATPase is composed of subunits A(3), B(3), C, D, E(1 or 2), F, H(2), I and K(x).

It is found in the cell membrane. In terms of biological role, component of the A-type ATP synthase that produces ATP from ADP in the presence of a proton gradient across the membrane. This is A-type ATP synthase subunit F from Methanocaldococcus jannaschii (strain ATCC 43067 / DSM 2661 / JAL-1 / JCM 10045 / NBRC 100440) (Methanococcus jannaschii).